Consider the following 458-residue polypeptide: uncharacterized protein (458 aa).

The segment covering 1–10 (MQAEPKKSQA) has biased composition (basic and acidic residues). Positions 1–20 (MQAEPKKSQAEQRAVAEPVS) are disordered. One can recognise a TRAM domain in the interval 23–84 (VSLVGEEYEV…ARFLRADAVE (62 aa)). [4Fe-4S] cluster is bound by residues C97, C105, C108, and C193. Residues Q287, Y316, E340, and D384 each coordinate S-adenosyl-L-methionine. Catalysis depends on C411, which acts as the Nucleophile.

It belongs to the class I-like SAM-binding methyltransferase superfamily. RNA M5U methyltransferase family.

This is an uncharacterized protein from Streptomyces coelicolor (strain ATCC BAA-471 / A3(2) / M145).